The following is a 284-amino-acid chain: MDALSRLLMLNAPQGTIDKNCVLGSDWQLPHGAGELSVIRWHALTQGAAKLEMPTGEIFTLRPGNVVLLPQNSAHRLSHVDNESTCIVCGTLRLQHSARYFLTSLPETLFLAPVNHSVEYNWLREAIPFLQQESRSAMPGVDALCSQICATFFTLAVREWIAQVNTEKNILSLLLHPRLGAVIQQMLEMPGHAWTVESLASIAHMSRASFAQLFRDVSGTTPLAVLTKLRLQIAAQMFSRETLPVVVIAESVGYASESSFHKAFVREFGCTPGEYRERVRQLAP.

The cysteines at positions 21 and 89 are disulfide-linked. In terms of domain architecture, HTH araC/xylS-type spans 177 to 278 (PRLGAVIQQM…GCTPGEYRER (102 aa)). 2 DNA-binding regions (H-T-H motif) span residues 197 to 218 (ESLASIAHMSRASFAQLFRDVS) and 245 to 268 (VVVIAESVGYASESSFHKAFVREF).

With respect to regulation, oxydation of Cys-21 leads to partial activation of RclR, followed by the formation of an intramolecular disulfide bond between Cys-21 and Cys-89, which stabilizes the active form of RclR. Its function is as follows. Involved in reactive chlorine species (RCS) stress resistance. Up-regulates, in response to hypochlorous acid (HOCl), the expression of three genes essential for survival of RCS stress (rclA, rclB and rclC) and its own expression. This Escherichia coli (strain K12) protein is RCS-specific HTH-type transcriptional activator RclR (rclR).